A 542-amino-acid polypeptide reads, in one-letter code: MKSKRRDDIVQFCRENTLLVMTMFSVFLGVVLGFGLRPLNLSQETLQLINFPGEIFMQVLKMMILPLIFSSLISALAQMDAKESGQMGASTVLYYLSTAVLATILGIFLVTVIHPGDPSIKGTDISEAPSDGNVSPLDTFLDLVRNMFPENIIQATFERMQTTYVAIRPKIASKNGTSGNIIVKRSIGMTKGMNILGIIVFCTGFGIVISQLGERARIVVDFFVILDAVIMRWVVTLMWFAPLGITCLICGNLLELDDISDIASVLALYVFTVCAGLILHTIITVPLMYFFITRENPLPIFKGMIQAAVTAFGTASGGATLPMSMQCLEDHCGVDRRISRFVLPLGSTINMDGNALYEAVAVIFIAQLNNVQLSLAEVLTVSITATIASIGLGSVPAGLVSILLILNTVGLPVRDVSMLFTVDWLLDRVRTAVNVLGDAFAASMVQHLLQKKLDQADARHDYKTELKGEIELLKSAATSRRPSFTMSEASKELFLTHANTAGNSRIGSRIGSRRPSSTNLHLSWRNNNIEPPYTPLPNDENV.

The Cytoplasmic portion of the chain corresponds to 1–15; it reads MKSKRRDDIVQFCRE. Helical transmembrane passes span 16 to 36, 55 to 75, and 93 to 113; these read NTLL…GFGL, IFMQ…LISA, and LYYL…VTVI. At 114–191 the chain is on the extracellular side; it reads HPGDPSIKGT…IVKRSIGMTK (78 aa). N175 carries an N-linked (GlcNAc...) asparagine glycan. The next 5 membrane-spanning stretches (helical) occupy residues 192 to 212, 234 to 254, 265 to 285, 303 to 323, and 386 to 406; these read GMNI…ISQL, VVTL…GNLL, VLAL…IITV, GMIQ…TLPM, and TIAS…LLIL. Low complexity predominate over residues 505–517; it reads RIGSRIGSRRPSS. A disordered region spans residues 505–542; it reads RIGSRIGSRRPSSTNLHLSWRNNNIEPPYTPLPNDENV. Polar residues predominate over residues 518-529; it reads TNLHLSWRNNNI.

It belongs to the dicarboxylate/amino acid:cation symporter (DAACS) (TC 2.A.23) family.

The protein resides in the membrane. The polypeptide is Putative sodium-dependent excitatory amino acid transporter glt-6 (glt-6) (Caenorhabditis elegans).